An 817-amino-acid polypeptide reads, in one-letter code: B lymphocyte-induced maturation protein 1 homolog (817 aa).

Residues 1–62 (MGQGSGDDGV…PAGVSASGAR (62 aa)) are disordered. The segment covering 15–61 (FSSAAAAAHSPPHSPLSVGVSSASSATSSSSTPPSSTSPAGVSASGA) has biased composition (low complexity). Residues 103–241 (MNLILKSSSK…ANTELSFWFS (139 aa)) form the SET domain. C2H2-type zinc fingers lie at residues 508–530 (YACKDCNKTFGQLSNLKVHVRTH), 536–558 (FKCEICTKEFTQLAHLQKHHLVH), 564–586 (HRCDICDKRFSSTSNLKTHLRLH), and 592–614 (YTCDVCDAKFTQYVHLRLHKRLH). Residues 620–642 (YSCGTCGKKYISPSGLRTHWKTT) form a C2H2-type 5; degenerate zinc finger. The disordered stretch occupies residues 709 to 817 (LLGQGPSGMQ…LPSLGLPHYP (109 aa)). The segment covering 779-794 (QGGPSSGSGQQQHPQH) has biased composition (low complexity).

As to quaternary structure, interacts with dre-1; the interaction targets blmp-1 for proteasomal degradation. Interacts with ldb-1 and ham-3. Ubiquitinated by the SCF(dre-1) complex, leading to its degradation by the proteasome. In terms of tissue distribution, expressed in hypodermal, vulval, intestinal and distal tip cells.

Its subcellular location is the nucleus. The protein localises to the cytoplasm. Functionally, transcription factor which binds to enhancer elements in the promoter region of genes. Regulates the expression of the transcription factor bed-3 to control vulval development. Promotes terminal differentiation in the hypodermis and is involved in regulation of gonadal outgrowth and entry into the dauer stage. Regulates the timing of dorsalward migration of the distal tip cells of the hermaphrodite gonad by inhibiting precocious unc-5 and lin-29 expression which in turn prevents early dorsalward turning. Plays a role in male tail tip morphogenesis. The chain is B lymphocyte-induced maturation protein 1 homolog from Caenorhabditis elegans.